The primary structure comprises 526 residues: Glucose-6-phosphate isomerase (526 aa).

Glu-320 acts as the Proton donor in catalysis. Catalysis depends on residues His-349 and Lys-453.

This sequence belongs to the GPI family.

It is found in the cytoplasm. It carries out the reaction alpha-D-glucose 6-phosphate = beta-D-fructose 6-phosphate. The protein operates within carbohydrate biosynthesis; gluconeogenesis. It functions in the pathway carbohydrate degradation; glycolysis; D-glyceraldehyde 3-phosphate and glycerone phosphate from D-glucose: step 2/4. Its function is as follows. Catalyzes the reversible isomerization of glucose-6-phosphate to fructose-6-phosphate. The polypeptide is Glucose-6-phosphate isomerase (Gloeothece citriformis (strain PCC 7424) (Cyanothece sp. (strain PCC 7424))).